The following is a 274-amino-acid chain: Diaminopimelate epimerase (274 aa).

3 residues coordinate substrate: asparagine 11, glutamine 44, and asparagine 64. Residue cysteine 73 is the Proton donor of the active site. Residues 74–75, asparagine 157, asparagine 190, and 208–209 each bind substrate; these read GN and ER. Cysteine 217 (proton acceptor) is an active-site residue. A substrate-binding site is contributed by 218 to 219; that stretch reads GS.

It belongs to the diaminopimelate epimerase family. Homodimer.

Its subcellular location is the cytoplasm. The enzyme catalyses (2S,6S)-2,6-diaminopimelate = meso-2,6-diaminopimelate. It participates in amino-acid biosynthesis; L-lysine biosynthesis via DAP pathway; DL-2,6-diaminopimelate from LL-2,6-diaminopimelate: step 1/1. In terms of biological role, catalyzes the stereoinversion of LL-2,6-diaminopimelate (L,L-DAP) to meso-diaminopimelate (meso-DAP), a precursor of L-lysine and an essential component of the bacterial peptidoglycan. The polypeptide is Diaminopimelate epimerase (Actinobacillus pleuropneumoniae serotype 7 (strain AP76)).